The chain runs to 230 residues: NAD(P)H-quinone oxidoreductase subunit K, chloroplastic (230 aa).

[4Fe-4S] cluster-binding residues include Cys43, Cys44, Cys108, and Cys139.

This sequence belongs to the complex I 20 kDa subunit family. In terms of assembly, NDH is composed of at least 16 different subunits, 5 of which are encoded in the nucleus. It depends on [4Fe-4S] cluster as a cofactor.

Its subcellular location is the plastid. The protein resides in the chloroplast thylakoid membrane. It carries out the reaction a plastoquinone + NADH + (n+1) H(+)(in) = a plastoquinol + NAD(+) + n H(+)(out). The catalysed reaction is a plastoquinone + NADPH + (n+1) H(+)(in) = a plastoquinol + NADP(+) + n H(+)(out). Its function is as follows. NDH shuttles electrons from NAD(P)H:plastoquinone, via FMN and iron-sulfur (Fe-S) centers, to quinones in the photosynthetic chain and possibly in a chloroplast respiratory chain. The immediate electron acceptor for the enzyme in this species is believed to be plastoquinone. Couples the redox reaction to proton translocation, and thus conserves the redox energy in a proton gradient. This is NAD(P)H-quinone oxidoreductase subunit K, chloroplastic from Lotus japonicus (Lotus corniculatus var. japonicus).